We begin with the raw amino-acid sequence, 102 residues long: Putative septation protein SpoVG 1 (102 aa).

This sequence belongs to the SpoVG family.

Its function is as follows. Could be involved in septation. This chain is Putative septation protein SpoVG 1, found in Listeria innocua serovar 6a (strain ATCC BAA-680 / CLIP 11262).